Consider the following 178-residue polypeptide: Gluconokinase (178 aa).

Residue 19–26 (GVSGTGKT) participates in ATP binding.

It belongs to the gluconokinase GntK/GntV family. Monomer.

The catalysed reaction is D-gluconate + ATP = 6-phospho-D-gluconate + ADP + H(+). Its pathway is carbohydrate acid metabolism; D-gluconate degradation. Its activity is regulated as follows. Activated by magnesium. Functionally, phosphorylates gluconate to 6-phosphogluconate. In Gluconobacter oxydans (strain 621H) (Gluconobacter suboxydans), this protein is Gluconokinase.